The chain runs to 208 residues: uncharacterized protein (208 aa).

Positions 118 to 134 (QYPNQYQQQPQQQQPGY) are enriched in low complexity. Residues 118–208 (QYPNQYQQQP…HKKEKNEIKE (91 aa)) are disordered. Residues 138–175 (NYNQPPVQLNKQAYDNYQQNDYKSNNQPNLAKENNISN) are compositionally biased toward polar residues. The span at 187–201 (KKEKKHSFFSKLHKK) shows a compositional bias: basic residues.

This is an uncharacterized protein from Dictyostelium discoideum (Social amoeba).